The sequence spans 149 residues: Transcriptional repressor NrdR (149 aa).

A zinc finger spans residues 3–34; sequence CPFCAAVDTKVIDSRLVSDGSQVRRRRQCLDC. An ATP-cone domain is found at 49 to 139; sequence PRVIKSDEVR…VYRSFEDVRE (91 aa).

The protein belongs to the NrdR family. Zn(2+) serves as cofactor.

In terms of biological role, negatively regulates transcription of bacterial ribonucleotide reductase nrd genes and operons by binding to NrdR-boxes. This chain is Transcriptional repressor NrdR, found in Yersinia pseudotuberculosis serotype O:1b (strain IP 31758).